The following is a 513-amino-acid chain: MAKPHETILVLDFGGQYNQLIARRVRELHVYCEMHPYTISVDAIREMNPKGIIFTGGPASVYEEKAPAVDPAIYDLGIPILGICYGMQLMVNQLGGKVGRAESREYGKASLTITASEGPFAGMEGDVQCWMSHGDKVEVLPHGFVGSGKTDHAPFAAMADPVRRFYGVQFHPEVRHTPQGMDMMRNFLFGVCGCTGEWTMENFIEEQVAAIRARVGSGKVLCALSGGVDSSVAALLVHRAVGEQLTCVYVDHGFMRLNESERIIKTFRDELGMNLIAVEASERFMAKVAGVSDPETKRKSIGNEFIRVFEEEAAKLGQVDFLVQGTLYPDVVESGTSTAETIKTHHNVGGLPEDMKFELIEPLRTLFKDEVREVGQRLGLPEDIVWRQPFPGPGLAIRVLGEITKESLDILRHADDIVFQEIKKAGLYRQIWQSFVVLPTTVRSVGVMGDGRTYEYPAILRAVTSDDAMTADWARLPYELLEKISNRIVNEVKGVNRVVYDITSKPPGTIEWE.

The Glutamine amidotransferase type-1 domain maps to 7–197 (TILVLDFGGQ…LFGVCGCTGE (191 aa)). Residue Cys84 is the Nucleophile of the active site. Residues His171 and Glu173 contribute to the active site. A GMPS ATP-PPase domain is found at 198–387 (WTMENFIEEQ…LGLPEDIVWR (190 aa)). 225-231 (SGGVDSS) serves as a coordination point for ATP.

As to quaternary structure, homodimer.

It catalyses the reaction XMP + L-glutamine + ATP + H2O = GMP + L-glutamate + AMP + diphosphate + 2 H(+). It functions in the pathway purine metabolism; GMP biosynthesis; GMP from XMP (L-Gln route): step 1/1. Catalyzes the synthesis of GMP from XMP. The protein is GMP synthase [glutamine-hydrolyzing] of Heliobacterium modesticaldum (strain ATCC 51547 / Ice1).